The sequence spans 973 residues: EF-hand calcium-binding domain-containing protein 13 (973 aa).

Positions 384–448 (YSKNGINFKK…HSSLQKQVSS (65 aa)) are disordered. The segment covering 396–405 (EKGEIHDSKS) has biased composition (basic and acidic residues). Positions 406–418 (KPQSLKSSTSLSK) are enriched in low complexity. EF-hand domains are found at residues 488–523 (LLDE…ERSF), 524–559 (PECN…FGIY), 633–668 (LKKD…MRDA), 756–791 (PKVN…LNVN), 792–827 (LTEE…SPHF), and 864–899 (TANA…ILTI).

The polypeptide is EF-hand calcium-binding domain-containing protein 13 (EFCAB13) (Homo sapiens (Human)).